The sequence spans 572 residues: Beta-fructofuranosidase, insoluble isoenzyme CWINV5 (572 aa).

The N-terminal stretch at Met1–Ala23 is a signal peptide. Substrate-binding positions include Trp54–Asp57 and Gln73. Asp57 is a catalytic residue. N-linked (GlcNAc...) asparagine glycosylation occurs at Asn84. A substrate-binding site is contributed by Trp118–Ser119. N-linked (GlcNAc...) asparagine glycosylation is found at Asn152 and Asn179. Substrate contacts are provided by residues Arg184–Asp185 and Glu239. Asn333 and Asn438 each carry an N-linked (GlcNAc...) asparagine glycan. A disulfide bridge links Cys434 with Cys481.

This sequence belongs to the glycosyl hydrolase 32 family. In terms of tissue distribution, expressed in flowers, and, to a lower extent, in leaves.

The protein resides in the secreted. Its subcellular location is the extracellular space. The protein localises to the apoplast. It localises to the cell wall. The catalysed reaction is Hydrolysis of terminal non-reducing beta-D-fructofuranoside residues in beta-D-fructofuranosides.. This Arabidopsis thaliana (Mouse-ear cress) protein is Beta-fructofuranosidase, insoluble isoenzyme CWINV5 (CWINV5).